The primary structure comprises 296 residues: uncharacterized protein (296 aa).

CBS domains are found at residues 176 to 232 (GIKE…DKKV) and 236 to 292 (MRRD…KFPE).

This is an uncharacterized protein from Methanocaldococcus jannaschii (strain ATCC 43067 / DSM 2661 / JAL-1 / JCM 10045 / NBRC 100440) (Methanococcus jannaschii).